The primary structure comprises 411 residues: Carbohydrate sulfotransferase 1 (411 aa).

Over 1 to 2 the chain is Cytoplasmic; sequence MQ. A helical; Signal-anchor for type II membrane protein membrane pass occupies residues 3 to 23; it reads CSWKAVLLLALASIAIQYTAI. The Lumenal segment spans residues 24 to 411; it reads RTFTAKSFHT…VEERDFRPFS (388 aa). N-linked (GlcNAc...) asparagine glycosylation is present at N56. 69 to 75 provides a ligand contact to 3'-phosphoadenylyl sulfate; sequence TRSGSSF. N-linked (GlcNAc...) asparagine glycosylation is found at N145 and N189. 234–242 provides a ligand contact to 3'-phosphoadenylyl sulfate; it reads RDPRGILAS. The N-linked (GlcNAc...) asparagine glycan is linked to N334. Residues 337–339 carry the Cell attachment site motif; it reads RGD.

It belongs to the sulfotransferase 1 family. Gal/GlcNAc/GalNAc subfamily. As to expression, widely expressed at low level. Expressed in brain and skeletal muscle. Expressed by high endothelial cells (HEVs) and leukocytes.

The protein resides in the golgi apparatus membrane. The catalysed reaction is 3'-phosphoadenylyl sulfate + keratan = adenosine 3',5'-bisphosphate + keratan 6'-sulfate.. The protein operates within glycan metabolism. In terms of biological role, sulfotransferase that utilizes 3'-phospho-5'-adenylyl sulfate (PAPS) as sulfonate donor to catalyze the transfer of sulfate to position 6 of internal galactose (Gal) residues of keratan. Cooperates with B4GALT4 and B3GNT7 glycosyltransferases and CHST6 sulfotransferase to construct and elongate disulfated disaccharide unit [-&gt;3(6-sulfoGalbeta)1-&gt;4(6-sulfoGlcNAcbeta)1-&gt;] within keratan sulfate polymer. Has a preference for sulfating keratan sulfate, but it also transfers sulfate to the unsulfated polymer. Involved in biosynthesis of phosphacan, a major keratan sulfate proteoglycan in the developing brain. Involved in biosynthesis of 6-sulfoGalbeta-containing O-linked glycans in high endothelial venules of lymph nodes. May act in a synergistic manner with CHST4 to generate sialyl 6',6-disulfo Lewis X motif, a recognition determinant for immune cell receptors implicated in leukocyte trafficking. Catalyzes sulfation of N-acetyllactosamine (LacNAc) oligosaccharides with highest efficiency for sialylated LacNAc structures. In Homo sapiens (Human), this protein is Carbohydrate sulfotransferase 1.